Reading from the N-terminus, the 188-residue chain is tRNA(Phe) 7-((3-amino-3-carboxypropyl)-4-demethylwyosine(37)-N(4))-methyltransferase (188 aa).

The protein belongs to the TYW3 family.

It catalyses the reaction 4-demethyl-7-[(3S)-3-amino-3-carboxypropyl]wyosine(37) in tRNA(Phe) + S-adenosyl-L-methionine = 7-[(3S)-3-amino-3-carboxypropyl]wyosine(37) in tRNA(Phe) + S-adenosyl-L-homocysteine + H(+). In terms of biological role, S-adenosyl-L-methionine-dependent methyltransferase that acts as a component of the wyosine derivatives biosynthesis pathway. Probably methylates N-4 position of wybutosine-86 to produce wybutosine-72. The chain is tRNA(Phe) 7-((3-amino-3-carboxypropyl)-4-demethylwyosine(37)-N(4))-methyltransferase from Aeropyrum pernix (strain ATCC 700893 / DSM 11879 / JCM 9820 / NBRC 100138 / K1).